The sequence spans 297 residues: ER membrane protein complex subunit 2-A (297 aa).

TPR repeat units follow at residues H87–N120, Q155–N188, and Y192–N225.

This sequence belongs to the EMC2 family. As to quaternary structure, component of the ER membrane protein complex (EMC).

It localises to the endoplasmic reticulum membrane. In terms of biological role, part of the endoplasmic reticulum membrane protein complex (EMC) that enables the energy-independent insertion into endoplasmic reticulum membranes of newly synthesized membrane proteins. Preferentially accommodates proteins with transmembrane domains that are weakly hydrophobic or contain destabilizing features such as charged and aromatic residues. Involved in the cotranslational insertion of multi-pass membrane proteins in which stop-transfer membrane-anchor sequences become ER membrane spanning helices. It is also required for the post-translational insertion of tail-anchored/TA proteins in endoplasmic reticulum membranes. By mediating the proper cotranslational insertion of N-terminal transmembrane domains in an N-exo topology, with translocated N-terminus in the lumen of the ER, controls the topology of multi-pass membrane proteins. By regulating the insertion of various proteins in membranes, it is indirectly involved in many cellular processes. The polypeptide is ER membrane protein complex subunit 2-A (emc2-a) (Xenopus laevis (African clawed frog)).